The chain runs to 212 residues: Adenylate kinase (212 aa).

10–15 (GAGKGT) serves as a coordination point for ATP. The interval 30–59 (STGDMFRAAMANQTEMGRLAKSYIDKGELV) is NMP. Residues T31, R36, 57–59 (ELV), 86–89 (GYPR), and Q93 contribute to the AMP site. The interval 127–159 (GRIINRKTGETFHKVFNPPVDYKEEDYYQREDD) is LID. ATP-binding positions include R128 and 137–138 (TF). Positions 156 and 167 each coordinate AMP. An ATP-binding site is contributed by Q195.

It belongs to the adenylate kinase family. In terms of assembly, monomer.

Its subcellular location is the cytoplasm. It catalyses the reaction AMP + ATP = 2 ADP. Its pathway is purine metabolism; AMP biosynthesis via salvage pathway; AMP from ADP: step 1/1. Functionally, catalyzes the reversible transfer of the terminal phosphate group between ATP and AMP. Plays an important role in cellular energy homeostasis and in adenine nucleotide metabolism. The protein is Adenylate kinase of Streptococcus pyogenes serotype M1.